Reading from the N-terminus, the 432-residue chain is Adenosine 3'-phospho 5'-phosphosulfate transporter 1 (432 aa).

9 helical membrane passes run tryptophan 5 to glutamate 25, valine 40 to phenylalanine 60, alanine 109 to leucine 129, phenylalanine 154 to cysteine 174, tryptophan 238 to glycine 258, proline 265 to threonine 285, serine 299 to leucine 319, leucine 353 to leucine 373, and glycine 387 to leucine 407. The residue at position 427 (serine 427) is a Phosphoserine.

It belongs to the nucleotide-sugar transporter family. SLC35B subfamily. Highly expressed in the placenta, pancreas, mammary gland and skeletal muscle. Weakly or not expressed in colon, heart and prostate. Expressed in the brain, predominantly in frontal lobe gray matter, subcortical frontal white matter and cerebellum.

It localises to the golgi apparatus membrane. It catalyses the reaction 3'-phosphoadenylyl sulfate(in) + adenosine 3',5'-bisphosphate(out) = 3'-phosphoadenylyl sulfate(out) + adenosine 3',5'-bisphosphate(in). Functionally, probably functions as a 3'-phosphoadenylyl sulfate:adenosine 3',5'-bisphosphate antiporter at the Golgi membranes. Mediates the transport from the cytosol into the lumen of the Golgi of 3'-phosphoadenylyl sulfate/adenosine 3'-phospho 5'-phosphosulfate (PAPS), a universal sulfuryl donor for sulfation events that take place in that compartment. This is Adenosine 3'-phospho 5'-phosphosulfate transporter 1 from Homo sapiens (Human).